We begin with the raw amino-acid sequence, 468 residues long: UDP-N-acetylmuramate--L-alanine ligase (468 aa).

Residue G114–T120 coordinates ATP.

Belongs to the MurCDEF family.

It is found in the cytoplasm. The enzyme catalyses UDP-N-acetyl-alpha-D-muramate + L-alanine + ATP = UDP-N-acetyl-alpha-D-muramoyl-L-alanine + ADP + phosphate + H(+). It participates in cell wall biogenesis; peptidoglycan biosynthesis. Its function is as follows. Cell wall formation. This is UDP-N-acetylmuramate--L-alanine ligase from Rhodopseudomonas palustris (strain HaA2).